The chain runs to 304 residues: Protease HtpX homolog (304 aa).

Helical transmembrane passes span 14-34 and 39-59; these read VFII…IGII and YLNG…IMVM. Histidine 144 contributes to the Zn(2+) binding site. Glutamate 145 is an active-site residue. Histidine 148 provides a ligand contact to Zn(2+). 2 helical membrane-spanning segments follow: residues 159-179 and 202-222; these read IAIA…RLIF and IIIY…ATAI. Glutamate 231 is a Zn(2+) binding site. The tract at residues 275-304 is disordered; it reads SSPLKSKKDKPGLFDSHPPISSRIERLENM.

This sequence belongs to the peptidase M48B family. Zn(2+) serves as cofactor.

It is found in the cell membrane. The chain is Protease HtpX homolog from Listeria innocua serovar 6a (strain ATCC BAA-680 / CLIP 11262).